The following is a 199-amino-acid chain: Probable cobalt-precorrin-6B C(15)-methyltransferase (decarboxylating) (199 aa).

S-adenosyl-L-methionine is bound by residues Thr24, 48-52 (GCGTG), Asp72, and Ala101.

It belongs to the methyltransferase superfamily. Archaeal-type CbiT family.

The enzyme catalyses Co-precorrin-6B + S-adenosyl-L-methionine = Co-precorrin-7 + S-adenosyl-L-homocysteine + CO2. The protein operates within cofactor biosynthesis; adenosylcobalamin biosynthesis; cob(II)yrinate a,c-diamide from sirohydrochlorin (anaerobic route): step 8/10. Catalyzes the methylation of C-15 in cobalt-precorrin-6B followed by the decarboxylation of C-12 to form cobalt-precorrin-7. In Saccharolobus islandicus (strain L.S.2.15 / Lassen #1) (Sulfolobus islandicus), this protein is Probable cobalt-precorrin-6B C(15)-methyltransferase (decarboxylating).